Reading from the N-terminus, the 344-residue chain is Meiotic expression up-regulated protein 26 (344 aa).

Its subcellular location is the nucleus. The protein is Meiotic expression up-regulated protein 26 (meu26) of Schizosaccharomyces pombe (strain 972 / ATCC 24843) (Fission yeast).